A 356-amino-acid chain; its full sequence is Cyclin-D2-2 (356 aa).

The segment covering 325–343 (LGSSQSNSNNKDYNSQDSA) has biased composition (polar residues). The disordered stretch occupies residues 325 to 356 (LGSSQSNSNNKDYNSQDSAPASKRRRLNTTPI). The span at 346–356 (SKRRRLNTTPI) shows a compositional bias: basic residues.

Belongs to the cyclin family. Cyclin D subfamily.

The chain is Cyclin-D2-2 (CYCD2-2) from Oryza sativa subsp. japonica (Rice).